Reading from the N-terminus, the 338-residue chain is Ketol-acid reductoisomerase (NADP(+)) (338 aa).

The KARI N-terminal Rossmann domain occupies 1–181; it reads MKVYYDKDAD…GGTKGGVIET (181 aa). NADP(+) is bound by residues 24 to 27, Arg-47, and Ser-52; that span reads YGSQ. The active site involves His-107. NADP(+) is bound at residue Gly-133. One can recognise a KARI C-terminal knotted domain in the interval 182 to 327; that stretch reads NFREETETDL…GQLRDMMPWI (146 aa). The Mg(2+) site is built by Asp-190, Glu-194, Glu-226, and Glu-230. Ser-251 serves as a coordination point for substrate.

Belongs to the ketol-acid reductoisomerase family. Requires Mg(2+) as cofactor.

It catalyses the reaction (2R)-2,3-dihydroxy-3-methylbutanoate + NADP(+) = (2S)-2-acetolactate + NADPH + H(+). The enzyme catalyses (2R,3R)-2,3-dihydroxy-3-methylpentanoate + NADP(+) = (S)-2-ethyl-2-hydroxy-3-oxobutanoate + NADPH + H(+). The protein operates within amino-acid biosynthesis; L-isoleucine biosynthesis; L-isoleucine from 2-oxobutanoate: step 2/4. It functions in the pathway amino-acid biosynthesis; L-valine biosynthesis; L-valine from pyruvate: step 2/4. Functionally, involved in the biosynthesis of branched-chain amino acids (BCAA). Catalyzes an alkyl-migration followed by a ketol-acid reduction of (S)-2-acetolactate (S2AL) to yield (R)-2,3-dihydroxy-isovalerate. In the isomerase reaction, S2AL is rearranged via a Mg-dependent methyl migration to produce 3-hydroxy-3-methyl-2-ketobutyrate (HMKB). In the reductase reaction, this 2-ketoacid undergoes a metal-dependent reduction by NADPH to yield (R)-2,3-dihydroxy-isovalerate. The sequence is that of Ketol-acid reductoisomerase (NADP(+)) from Dechloromonas aromatica (strain RCB).